An 89-amino-acid chain; its full sequence is Mitochondrial import inner membrane translocase subunit tim10 (89 aa).

The Twin CX3C motif motif lies at 39–64 (CHKKCISPKYYEADLTKGESVCIDRC). 2 disulfide bridges follow: Cys39–Cys64 and Cys43–Cys60.

The protein belongs to the small Tim family. As to quaternary structure, heterohexamer; composed of 3 copies of TIM9 and 3 copies of TIM10, named soluble 70 kDa complex. Associates directly with the TIM22 complex, whose core is composed of TIM22 and TIM54. Interacts with the transmembrane regions of multi-pass transmembrane proteins in transit.

Its subcellular location is the mitochondrion inner membrane. Functionally, mitochondrial intermembrane chaperone that participates in the import and insertion of multi-pass transmembrane proteins into the mitochondrial inner membrane. Also required for the transfer of beta-barrel precursors from the TOM complex to the sorting and assembly machinery (SAM complex) of the outer membrane. Acts as a chaperone-like protein that protects the hydrophobic precursors from aggregation and guide them through the mitochondrial intermembrane space. The protein is Mitochondrial import inner membrane translocase subunit tim10 (tim10) of Schizosaccharomyces pombe (strain 972 / ATCC 24843) (Fission yeast).